The chain runs to 297 residues: N-acetylmuramic acid 6-phosphate etherase (297 aa).

Residues 55 to 218 (AAAALKSGGR…STGAMVKFGK (164 aa)) form the SIS domain. Glu83 functions as the Proton donor in the catalytic mechanism. Glu114 is a catalytic residue.

It belongs to the GCKR-like family. MurNAc-6-P etherase subfamily. Homodimer.

It carries out the reaction N-acetyl-D-muramate 6-phosphate + H2O = N-acetyl-D-glucosamine 6-phosphate + (R)-lactate. The protein operates within amino-sugar metabolism; 1,6-anhydro-N-acetylmuramate degradation. It participates in amino-sugar metabolism; N-acetylmuramate degradation. Its pathway is cell wall biogenesis; peptidoglycan recycling. Functionally, specifically catalyzes the cleavage of the D-lactyl ether substituent of MurNAc 6-phosphate, producing GlcNAc 6-phosphate and D-lactate. Together with AnmK, is also required for the utilization of anhydro-N-acetylmuramic acid (anhMurNAc) either imported from the medium or derived from its own cell wall murein, and thus plays a role in cell wall recycling. The polypeptide is N-acetylmuramic acid 6-phosphate etherase (Salmonella schwarzengrund (strain CVM19633)).